A 259-amino-acid polypeptide reads, in one-letter code: Small ribosomal subunit protein mS23 (259 aa).

Positions 230–244 (RAASFTGSALPSSEE) are enriched in polar residues. The disordered stretch occupies residues 230 to 259 (RAASFTGSALPSSEESAPVDEETEKVPQQV).

This sequence belongs to the mitochondrion-specific ribosomal protein mS23 family. In terms of assembly, component of the mitochondrial small ribosomal subunit.

The protein resides in the mitochondrion. The protein is Small ribosomal subunit protein mS23 (rsm25) of Aspergillus terreus (strain NIH 2624 / FGSC A1156).